The primary structure comprises 205 residues: MLTDYEEQLWNSMERICGIDEAGRGPLAGPVVAAAVVFPRWFRPGKGILGRMNDSKKLSPSLRREMAPAIQDAALAWSVSVVDAQTIDRINILSATMLAMNRAVGGLGLTPDMLLVDGNRFSPETPVAYRTLVGGDAYIYSIAAASVLAKTARDAIMSSYDRDYPEYGFARHAGYPTAMHISAIRQHGRCPIHRFSFKVRRLNEA.

The RNase H type-2 domain maps to 14-205; it reads ERICGIDEAG…SFKVRRLNEA (192 aa). A divalent metal cation contacts are provided by aspartate 20, glutamate 21, and aspartate 117.

Belongs to the RNase HII family. The cofactor is Mn(2+). Requires Mg(2+) as cofactor.

It localises to the cytoplasm. It carries out the reaction Endonucleolytic cleavage to 5'-phosphomonoester.. Endonuclease that specifically degrades the RNA of RNA-DNA hybrids. This chain is Ribonuclease HII, found in Chlorobium phaeovibrioides (strain DSM 265 / 1930) (Prosthecochloris vibrioformis (strain DSM 265)).